The sequence spans 177 residues: Protein GrpE (177 aa).

2 stretches are compositionally biased toward basic and acidic residues: residues 1–19 (MAKH…KETV) and 29–41 (SPEK…ANER). The disordered stretch occupies residues 1-41 (MAKHKHEEHPEDVEVKETVETAEQAESASPEKSELELANER).

The protein belongs to the GrpE family. As to quaternary structure, homodimer.

It localises to the cytoplasm. Functionally, participates actively in the response to hyperosmotic and heat shock by preventing the aggregation of stress-denatured proteins, in association with DnaK and GrpE. It is the nucleotide exchange factor for DnaK and may function as a thermosensor. Unfolded proteins bind initially to DnaJ; upon interaction with the DnaJ-bound protein, DnaK hydrolyzes its bound ATP, resulting in the formation of a stable complex. GrpE releases ADP from DnaK; ATP binding to DnaK triggers the release of the substrate protein, thus completing the reaction cycle. Several rounds of ATP-dependent interactions between DnaJ, DnaK and GrpE are required for fully efficient folding. In Streptococcus gordonii (strain Challis / ATCC 35105 / BCRC 15272 / CH1 / DL1 / V288), this protein is Protein GrpE.